Reading from the N-terminus, the 352-residue chain is uncharacterized protein (352 aa).

The N-terminal 55 residues, 1–55 (MAMAALTSSSSAITLLNKPFLPNRSSFFSSDSQSPLLRFSASTSVRSRFPSAAIS), are a transit peptide targeting the chloroplast.

The protein belongs to the methyltransferase superfamily.

It is found in the plastid. The protein localises to the chloroplast. Its subcellular location is the plastoglobule. This is an uncharacterized protein from Arabidopsis thaliana (Mouse-ear cress).